The primary structure comprises 618 residues: Glutamine--fructose-6-phosphate aminotransferase [isomerizing] (618 aa).

Residue Cys2 is the Nucleophile; for GATase activity of the active site. The region spanning 2 to 226 (CGIVGYAGRN…DFETAVLSPT (225 aa)) is the Glutamine amidotransferase type-2 domain. Positions 69–94 (HTRWATHGRPSTKNAHPHNSGGNPGK) are disordered. 2 consecutive SIS domains span residues 295–434 (SEDE…VRDR) and 467–608 (CAEG…IDKP). Residue Lys613 is the For Fru-6P isomerization activity of the active site.

As to quaternary structure, homodimer.

It localises to the cytoplasm. It carries out the reaction D-fructose 6-phosphate + L-glutamine = D-glucosamine 6-phosphate + L-glutamate. Catalyzes the first step in hexosamine metabolism, converting fructose-6P into glucosamine-6P using glutamine as a nitrogen source. This Methanosarcina acetivorans (strain ATCC 35395 / DSM 2834 / JCM 12185 / C2A) protein is Glutamine--fructose-6-phosphate aminotransferase [isomerizing].